Consider the following 200-residue polypeptide: Translation machinery-associated protein 22 (200 aa).

Residues 106–177 (VQIKRVERNK…DVLEWLVEVH (72 aa)) form the SUI1 domain.

This sequence belongs to the DENR family. As to quaternary structure, interacts with the 40S ribosomal subunit.

It is found in the cytoplasm. This chain is Translation machinery-associated protein 22 (TMA22), found in Coccidioides immitis (strain RS) (Valley fever fungus).